Here is a 393-residue protein sequence, read N- to C-terminus: NAD(P)H-quinone oxidoreductase subunit H, chloroplastic (393 aa).

This sequence belongs to the complex I 49 kDa subunit family. NDH is composed of at least 16 different subunits, 5 of which are encoded in the nucleus.

The protein localises to the plastid. It is found in the chloroplast thylakoid membrane. The enzyme catalyses a plastoquinone + NADH + (n+1) H(+)(in) = a plastoquinol + NAD(+) + n H(+)(out). It carries out the reaction a plastoquinone + NADPH + (n+1) H(+)(in) = a plastoquinol + NADP(+) + n H(+)(out). Its function is as follows. NDH shuttles electrons from NAD(P)H:plastoquinone, via FMN and iron-sulfur (Fe-S) centers, to quinones in the photosynthetic chain and possibly in a chloroplast respiratory chain. The immediate electron acceptor for the enzyme in this species is believed to be plastoquinone. Couples the redox reaction to proton translocation, and thus conserves the redox energy in a proton gradient. The chain is NAD(P)H-quinone oxidoreductase subunit H, chloroplastic from Draba nemorosa (Woodland whitlowgrass).